Here is a 190-residue protein sequence, read N- to C-terminus: Surfactant protein C (190 aa).

Positions 1 to 24 (MDVGSKEVLMESPPDYTAVPGGRL) are excised as a propeptide. S-palmitoyl cysteine attachment occurs at residues Cys28 and Cys29. The propeptide occupies 59–190 (HMSQKHTEMV…LCGEVPLYYT (132 aa)). A BRICHOS domain is found at 94–190 (FSIGSTGTVV…LCGEVPLYYT (97 aa)). Residues Cys121 and Cys182 are joined by a disulfide bond.

It localises to the secreted. The protein localises to the extracellular space. It is found in the surface film. Its function is as follows. Pulmonary surfactant associated proteins promote alveolar stability by lowering the surface tension at the air-liquid interface in the peripheral air spaces. The chain is Surfactant protein C (SFTPC) from Bos taurus (Bovine).